The primary structure comprises 214 residues: Probable transaldolase (214 aa).

The Schiff-base intermediate with substrate role is filled by Lys83.

This sequence belongs to the transaldolase family. Type 3B subfamily.

The protein localises to the cytoplasm. It carries out the reaction D-sedoheptulose 7-phosphate + D-glyceraldehyde 3-phosphate = D-erythrose 4-phosphate + beta-D-fructose 6-phosphate. The protein operates within carbohydrate degradation; pentose phosphate pathway; D-glyceraldehyde 3-phosphate and beta-D-fructose 6-phosphate from D-ribose 5-phosphate and D-xylulose 5-phosphate (non-oxidative stage): step 2/3. In terms of biological role, transaldolase is important for the balance of metabolites in the pentose-phosphate pathway. This chain is Probable transaldolase, found in Thermodesulfovibrio yellowstonii (strain ATCC 51303 / DSM 11347 / YP87).